The chain runs to 454 residues: uncharacterized protein (454 aa).

The region spanning 364 to 405 (CSRPGCDAPAYHSEVHHVTPWTTTHRTDINDLTLACGPDNRL) is the HNH domain.

The protein belongs to the Rv1128c/1148c/1588c/1702c/1945/3466 family.

This is an uncharacterized protein from Mycobacterium tuberculosis (strain CDC 1551 / Oshkosh).